The chain runs to 391 residues: Formate-dependent phosphoribosylglycinamide formyltransferase (391 aa).

N(1)-(5-phospho-beta-D-ribosyl)glycinamide is bound by residues 20–21 (EL) and glutamate 80. ATP is bound by residues arginine 112, lysine 153, 158-163 (SSGKGQ), 193-196 (EGFV), and glutamate 201. An ATP-grasp domain is found at 117–306 (RLAAEELQLP…EFALHVRAFT (190 aa)). Residues glutamate 265 and glutamate 277 each contribute to the Mg(2+) site. Residues aspartate 284, lysine 354, and 361–362 (RR) contribute to the N(1)-(5-phospho-beta-D-ribosyl)glycinamide site.

Belongs to the PurK/PurT family. As to quaternary structure, homodimer.

It carries out the reaction N(1)-(5-phospho-beta-D-ribosyl)glycinamide + formate + ATP = N(2)-formyl-N(1)-(5-phospho-beta-D-ribosyl)glycinamide + ADP + phosphate + H(+). The protein operates within purine metabolism; IMP biosynthesis via de novo pathway; N(2)-formyl-N(1)-(5-phospho-D-ribosyl)glycinamide from N(1)-(5-phospho-D-ribosyl)glycinamide (formate route): step 1/1. In terms of biological role, involved in the de novo purine biosynthesis. Catalyzes the transfer of formate to 5-phospho-ribosyl-glycinamide (GAR), producing 5-phospho-ribosyl-N-formylglycinamide (FGAR). Formate is provided by PurU via hydrolysis of 10-formyl-tetrahydrofolate. The protein is Formate-dependent phosphoribosylglycinamide formyltransferase of Aliivibrio fischeri (strain ATCC 700601 / ES114) (Vibrio fischeri).